The following is a 484-amino-acid chain: MGSAFERVVRRVVQELDHGGEFIPVTSLQSSTGFQPYCLVVRKPSSSWFWKPRYKCVNLSIKDILEPDAAEPDVQRGRSFHFYDAMDGQIQGSVELAAPGQAKIAGGAAVSDSSSTSMNVYSLSVDPNTWQTLLHERHLRQPEHKVLQQLRSRGDNVYVVTEVLQTQKEVEVTRTHKREGSGRFSLPGATCLQGEGQGHLSQKKTVTIPSGSTLAFRVAQLVIDSDLDVLLFPDKKQRTFQPPATGHKRSTSEGAWPQLPSGLSMMRCLHNFLTDGVPAEGAFTEDFQGLRAEVETISKELELLDRELCQLLLEGLEGVLRDQLALRALEEALEQGQSLGPVEPLDGPAGAVLECLVLSSGMLVPELAIPVVYLLGALTMLSETQHKLLAEALESQTLLGPLELVGSLLEQSAPWQERSTMSLPPGLLGNSWGEGAPAWVLLDECGLELGEDTPHVCWEPQAQGRMCALYASLALLSGLSQEPH.

Y37 is subject to Phosphotyrosine. An S-(2-succinyl)cysteine modification is found at C56. 2 beta stranded membrane passes run 91-97 (QGSVELA) and 103-108 (KIAGGA). Y158 is modified (phosphotyrosine). The next 2 beta stranded transmembrane spans lie at 180-186 (GSGRFSL) and 191-197 (CLQGEGQ). Position 185 is a phosphoserine (S185). An S-(2-succinyl)cysteine mark is found at C191 and C268. Residue C191 is the site of S-palmitoyl cysteine attachment. Residues 277-296 (VPAEGAFTEDFQGLRAEVET) are linker helix loop. C309 carries the S-(2-succinyl)cysteine modification. O-linked (GlcNAc) serine glycosylation occurs at S338. C467 carries the post-translational modification S-(2-succinyl)cysteine.

This sequence belongs to the gasdermin family. In terms of assembly, homooligomer; homooligomeric ring-shaped pore complex containing 27-28 subunits when inserted in the membrane. Homooligomerization is promoted by the mTORC1 complex in macrophages. In response to a canonical inflammasome stimulus, such as nigericin, recruited to NLRP3 inflammasone with similar kinetics to that of uncleaved CASP1 precursor. Although this recruitment is also observed in the absence of PYCARD, it is more efficient in its presence. Cleavage at Asp-275 by CASP1 (mature and uncleaved precursor forms), CASP4, CASP5 or CASP8 relieves autoinhibition and is sufficient to initiate pyroptosis. Cleavage by CASP1 and CASP4 is not strictly dependent on the consensus cleavage site on GSDMD but depends on an exosite interface on CASP1 that recognizes and binds the Gasdermin-D, C-terminal (GSDMD-CT) part. Cleavage by CASP8 takes place following inactivation of MAP3K7/TAK1 by Yersinia toxin YopJ. Cleavage at Asp-87 by CASP3 or CASP7 inactivates the ability to mediate pyroptosis, but generates the Gasdermin-D, p13 chain, which translocates to the nucleus and acts as a transcription regulator. Cleavage by papain allergen generates the Gasdermin-D, p40 chain. Post-translationally, palmitoylated at Cys-191 by ZDHHC5 and ZDHHC9 in response to microbial infection and danger signals. Palmitoylation takes place before cleavage by caspases (CASP1, CASP4, CASP5 or CASP8) and is required for membrane translocation and pore formation. Depalmitoylated by LYPLA2. In terms of processing, succination of Cys-191 by the Krebs cycle intermediate fumarate, which leads to S-(2-succinyl)cysteine residues, inhibits processing by caspases, and ability to initiate pyroptosis. Succination modification is catalyzed by a non-enzymatic reaction caused by an accumulation of fumarate. Glycosylated: O-GlcNAcylation by OGT leads to reduced cleavage by CASP4 and decreased LPS-induced endothelial cell pyroptosis. Post-translationally, (Microbial infection) Cleaved and inactivated by Protease 3C from Human enterovirus 71 (EV71), preventing GSDMD-mediated pyroptosis. In terms of processing, (Microbial infection) Cleaved and inactivated by the 3C-like proteinase nsp5 from human coronavirus SARS-CoV-2, preventing GSDMD-mediated pyroptosis. (Microbial infection) Ubiquitinated by S.flexneri IpaH7.8, leading to its degradation by the proteasome. As to expression, expressed in the suprabasal cells of esophagus, as well as in the isthmus/neck, pit, and gland of the stomach, suggesting preferential expression in differentiating cells.

It localises to the cytoplasm. The protein resides in the cytosol. The protein localises to the inflammasome. Its subcellular location is the cell membrane. It is found in the secreted. It localises to the mitochondrion membrane. The protein resides in the nucleus. Its activity is regulated as follows. The full-length protein before cleavage is inactive: intramolecular interactions between N- and C-terminal domains mediate autoinhibition in the absence of activation signal. The intrinsic pyroptosis-inducing activity is carried by the released N-terminal moiety (Gasdermin-D, N-terminal) following cleavage by caspases CASP1, CASP4, CASP5 or CASP8. Cleavage at Asp-87 by CASP3 or CASP7 inactivates the ability to mediate pyroptosis. Homooligomerization and pore formation is specifically inhibited by VHH(GSDMD-1) and, to a lesser extent, VHH(GSDMD-2) nanobodies, protecting against excessive pyroptosis. Inhibited by small molecule NU6300, which covalently reacts with Cys-191, thereby preventing palmitoylation and pyroptosis. In terms of biological role, precursor of a pore-forming protein that plays a key role in host defense against pathogen infection and danger signals. This form constitutes the precursor of the pore-forming protein: upon cleavage, the released N-terminal moiety (Gasdermin-D, N-terminal) binds to membranes and forms pores, triggering pyroptosis. Functionally, promotes pyroptosis in response to microbial infection and danger signals. Produced by the cleavage of gasdermin-D by inflammatory caspases CASP1, CASP4 or CASP5 in response to canonical, as well as non-canonical (such as cytosolic LPS) inflammasome activators. After cleavage, moves to the plasma membrane where it strongly binds to inner leaflet lipids, including monophosphorylated phosphatidylinositols, such as phosphatidylinositol 4-phosphate, bisphosphorylated phosphatidylinositols, such as phosphatidylinositol (4,5)-bisphosphate, as well as phosphatidylinositol (3,4,5)-bisphosphate, and more weakly to phosphatidic acid and phosphatidylserine. Homooligomerizes within the membrane and forms pores of 10-15 nanometers (nm) of inner diameter, allowing the release of mature interleukin-1 (IL1B and IL18) and triggering pyroptosis. Gasdermin pores also allow the release of mature caspase-7 (CASP7). In some, but not all, cells types, pyroptosis is followed by pyroptotic cell death, which is caused by downstream activation of ninjurin-1 (NINJ1), which mediates membrane rupture (cytolysis). Also forms pores in the mitochondrial membrane, resulting in release of mitochondrial DNA (mtDNA) into the cytosol. Gasdermin-D, N-terminal released from pyroptotic cells into the extracellular milieu rapidly binds to and kills both Gram-negative and Gram-positive bacteria, without harming neighboring mammalian cells, as it does not disrupt the plasma membrane from the outside due to lipid-binding specificity. Under cell culture conditions, also active against intracellular bacteria, such as Listeria monocytogenes. Also active in response to MAP3K7/TAK1 inactivation by Yersinia toxin YopJ, which triggers cleavage by CASP8 and subsequent activation. Required for mucosal tissue defense against enteric pathogens. Activation of the non-canonical inflammasome in brain endothelial cells can lead to excessive pyroptosis, leading to blood-brain barrier breakdown. Strongly binds to bacterial and mitochondrial lipids, including cardiolipin. Does not bind to unphosphorylated phosphatidylinositol, phosphatidylethanolamine nor phosphatidylcholine. Its function is as follows. Transcription coactivator produced by the cleavage by CASP3 or CASP7 in the upper small intestine in response to dietary antigens. Required to maintain food tolerance in small intestine: translocates to the nucleus and acts as a coactivator for STAT1 to induce the transcription of CIITA and MHC class II molecules, which in turn induce type 1 regulatory T (Tr1) cells in upper small intestine. Produced by the cleavage by papain allergen. After cleavage, moves to the plasma membrane and homooligomerizes within the membrane and forms pores of 10-15 nanometers (nm) of inner diameter, allowing the specific release of mature interleukin-33 (IL33), promoting type 2 inflammatory immune response. The sequence is that of Gasdermin-D from Homo sapiens (Human).